The sequence spans 398 residues: G2/mitotic-specific cyclin-B2 (398 aa).

At Thr-8 the chain carries Phosphothreonine. A phosphoserine mark is found at Ser-11, Ser-77, and Ser-92. Phosphothreonine is present on Thr-94. Phosphoserine is present on residues Ser-99, Ser-392, and Ser-398.

It belongs to the cyclin family. Cyclin AB subfamily. In terms of assembly, interacts with the CDK1 protein kinase to form a serine/threonine kinase holoenzyme complex also known as maturation promoting factor (MPF). The cyclin subunit imparts substrate specificity to the complex.

Its function is as follows. Essential for the control of the cell cycle at the G2/M (mitosis) transition. The chain is G2/mitotic-specific cyclin-B2 (CCNB2) from Macaca fascicularis (Crab-eating macaque).